Consider the following 449-residue polypeptide: Sensor protein QseC (449 aa).

At 1-12 (MKLTQRLSLRVR) the chain is on the cytoplasmic side. A helical transmembrane segment spans residues 13–33 (LTLIFLILVSITWAISSFVAW). Over 34–161 (RKTTDNVDEL…REDMALAIVA (128 aa)) the chain is Periplasmic. Residues 162–182 (AQLTPWLIALPFMLLILLLLL) traverse the membrane as a helical segment. The HAMP domain occupies 183-235 (HRELRPLKKLAQALRFRSPESETPLDAKGVPSEVRPLVEALNQLFSRIHSMMV). Topologically, residues 183–449 (HRELRPLKKL…EGGFEAVVRW (267 aa)) are cytoplasmic. The Histidine kinase domain maps to 243 to 449 (DAAHELRSPL…EGGFEAVVRW (207 aa)). H246 carries the post-translational modification Phosphohistidine; by autocatalysis.

Its subcellular location is the cell inner membrane. It carries out the reaction ATP + protein L-histidine = ADP + protein N-phospho-L-histidine.. In terms of biological role, member of a two-component regulatory system QseB/QseC. Activates the flagella regulon by activating transcription of FlhDC. May activate QseB by phosphorylation. This is Sensor protein QseC (qseC) from Salmonella typhi.